A 229-amino-acid chain; its full sequence is uncharacterized protein (229 aa).

The HTH cro/C1-type domain maps to 24-78 (LRKWRSIFNASQSDLARKLGISPSVISDYESGRRKPGTAFLKKFVCALIELDGER). Positions 35 to 54 (QSDLARKLGISPSVISDYES) form a DNA-binding region, H-T-H motif.

This is an uncharacterized protein from Archaeoglobus fulgidus (strain ATCC 49558 / DSM 4304 / JCM 9628 / NBRC 100126 / VC-16).